Consider the following 393-residue polypeptide: Argininosuccinate synthase (393 aa).

ATP contacts are provided by residues Ala-7–Ser-15 and Ala-34. Tyr-85 and Ser-90 together coordinate L-citrulline. Gly-115 is a binding site for ATP. 3 residues coordinate L-aspartate: Thr-117, Asn-121, and Asp-122. Asn-121 contributes to the L-citrulline binding site. L-citrulline is bound by residues Arg-125, Ser-176, Ser-185, Glu-261, and Tyr-273.

Belongs to the argininosuccinate synthase family. Type 1 subfamily. Homotetramer.

It is found in the cytoplasm. It carries out the reaction L-citrulline + L-aspartate + ATP = 2-(N(omega)-L-arginino)succinate + AMP + diphosphate + H(+). The protein operates within amino-acid biosynthesis; L-arginine biosynthesis; L-arginine from L-ornithine and carbamoyl phosphate: step 2/3. This Ehrlichia canis (strain Jake) protein is Argininosuccinate synthase.